The primary structure comprises 264 residues: 3-methyl-2-oxobutanoate hydroxymethyltransferase (264 aa).

Asp-45 and Asp-84 together coordinate Mg(2+). Residues 45–46 (DS), Asp-84, and Lys-112 contribute to the 3-methyl-2-oxobutanoate site. Glu-114 serves as a coordination point for Mg(2+). Glu-181 (proton acceptor) is an active-site residue.

This sequence belongs to the PanB family. In terms of assembly, homodecamer; pentamer of dimers. The cofactor is Mg(2+).

The protein resides in the cytoplasm. The enzyme catalyses 3-methyl-2-oxobutanoate + (6R)-5,10-methylene-5,6,7,8-tetrahydrofolate + H2O = 2-dehydropantoate + (6S)-5,6,7,8-tetrahydrofolate. It participates in cofactor biosynthesis; (R)-pantothenate biosynthesis; (R)-pantoate from 3-methyl-2-oxobutanoate: step 1/2. Functionally, catalyzes the reversible reaction in which hydroxymethyl group from 5,10-methylenetetrahydrofolate is transferred onto alpha-ketoisovalerate to form ketopantoate. The protein is 3-methyl-2-oxobutanoate hydroxymethyltransferase of Shewanella pealeana (strain ATCC 700345 / ANG-SQ1).